The primary structure comprises 1162 residues: Spike glycoprotein (1162 aa).

The first 18 residues, 1 to 18, serve as a signal peptide directing secretion; it reads MLVTPLLLVTLLCALCSA. The Extracellular segment spans residues 19–1095; sequence ALYDSSSYVY…LKTYIKWPWY (1077 aa). N-linked (GlcNAc...) asparagine; by host glycosylation is found at asparagine 51, asparagine 77, asparagine 103, asparagine 144, asparagine 163, asparagine 178, asparagine 212, asparagine 237, asparagine 247, asparagine 264, asparagine 271, asparagine 276, asparagine 306, asparagine 425, asparagine 447, asparagine 513, asparagine 530, asparagine 579, asparagine 591, asparagine 669, asparagine 676, and asparagine 714. Residues 769 to 874 are heptad repeat 1 (HR1); sequence IPFATQLQAR…QVDRLITGRL (106 aa). Positions 822–866 form a coiled coil; sequence QDVVNKQSAILTETMASLNKNFGAISSVIQEIYLQLDAIQANAQV. Residues asparagine 947, asparagine 960, asparagine 979, asparagine 1014, asparagine 1051, asparagine 1058, and asparagine 1074 are each glycosylated (N-linked (GlcNAc...) asparagine; by host). The segment at 1024 to 1105 is heptad repeat 2 (HR2); that stretch reads NDDFDFDDEL…VWLAIAFATI (82 aa). A coiled-coil region spans residues 1055-1083; sequence PVLNITYDIDKIEEVIKGLNDSLIDLETL. A helical membrane pass occupies residues 1096-1116; sequence VWLAIAFATIIFILILGWVFF. Residues 1117–1162 are Cytoplasmic-facing; that stretch reads MTGCCGCCCGCFGIIPLMSKCGKKSSYYTTFDNDVVTEQYRPKKSV. The Di-lysine motif signature appears at 1159-1162; that stretch reads KKSV.

The protein belongs to the gammacoronaviruses spike protein family. Homotrimer; each monomer consists of a S1 and a S2 subunit. The resulting peplomers protrude from the virus surface as spikes. In terms of processing, specific enzymatic cleavages in vivo yield mature proteins. The precursor is processed into S1 and S2 by host cell furin or furin-like protease to yield the mature S1 and S2 proteins. The cleavage site between S1 and S2 requires the optimal sequence [KR]-X-[KR]-R. Additionally, a second cleavage leads to the release of a fusion peptide after viral attachment to host cell receptor.

Its subcellular location is the virion membrane. The protein resides in the host endoplasmic reticulum-Golgi intermediate compartment membrane. Attaches the virion to the host cell membrane by interacting with sialic acids, initiating the infection. In terms of biological role, mediates fusion of the virion and cellular membranes by acting as a class I viral fusion protein. Under the current model, the protein has at least 3 conformational states: pre-fusion native state, pre-hairpin intermediate state, and post-fusion hairpin state. During viral and target cell membrane fusion, the coiled coil regions (heptad repeats) assume a trimer-of-hairpins structure, positioning the fusion peptide in close proximity to the C-terminal region of the ectodomain. The formation of this structure appears to drive apposition and subsequent fusion of viral and target cell membranes. Functionally, acts as a viral fusion peptide after S2 cleavage occurring upon virus endocytosis. This chain is Spike glycoprotein, found in Avian infectious bronchitis virus (strain KB8523) (IBV).